The sequence spans 37 residues: Dolichyl-diphosphooligosaccharide--protein glycosyltransferase subunit 4 (37 aa).

The Lumenal portion of the chain corresponds to Met1–Asp4. The chain crosses the membrane as a helical span at residues Val5–Tyr25. The Cytoplasmic segment spans residues His26–Glu37.

This sequence belongs to the OST4 family. In terms of assembly, component of the oligosaccharyltransferase (OST) complex. OST exists in two different complex forms which contain common core subunits RPN1, RPN2, OST48, OST4, DAD1 and TMEM258, either STT3A or STT3B as catalytic subunits, and form-specific accessory subunits. STT3A complex assembly occurs through the formation of 3 subcomplexes. Subcomplex 1 contains RPN1 and TMEM258, subcomplex 2 contains the STT3A-specific subunits STT3A, DC2/OSTC, and KCP2 as well as the core subunit OST4, and subcomplex 3 contains RPN2, DAD1, and OST48. The STT3A complex can form stable complexes with the Sec61 complex or with both the Sec61 and TRAP complexes.

The protein resides in the endoplasmic reticulum. Its subcellular location is the endoplasmic reticulum membrane. It participates in protein modification; protein glycosylation. In terms of biological role, subunit of the oligosaccharyl transferase (OST) complex that catalyzes the initial transfer of a defined glycan (Glc(3)Man(9)GlcNAc(2) in eukaryotes) from the lipid carrier dolichol-pyrophosphate to an asparagine residue within an Asn-X-Ser/Thr consensus motif in nascent polypeptide chains, the first step in protein N-glycosylation. N-glycosylation occurs cotranslationally and the complex associates with the Sec61 complex at the channel-forming translocon complex that mediates protein translocation across the endoplasmic reticulum (ER). All subunits are required for a maximal enzyme activity. Specifically involved in maintaining stability of STT3A-containing OST complexes. The sequence is that of Dolichyl-diphosphooligosaccharide--protein glycosyltransferase subunit 4 from Homo sapiens (Human).